The chain runs to 199 residues: Shikimate kinase (199 aa).

12–17 (GAGKST) contacts ATP. Mg(2+) is bound at residue Ser-16. The substrate site is built by Asp-34, Arg-58, and Gly-80. Arg-117 is a binding site for ATP. Arg-136 lines the substrate pocket. The segment at 174–199 (VSGGDRKSSEAERSGAPLRKSSEVVK) is disordered. Over residues 177-186 (GDRKSSEAER) the composition is skewed to basic and acidic residues.

Belongs to the shikimate kinase family. Monomer. Requires Mg(2+) as cofactor.

The protein localises to the cytoplasm. It catalyses the reaction shikimate + ATP = 3-phosphoshikimate + ADP + H(+). Its pathway is metabolic intermediate biosynthesis; chorismate biosynthesis; chorismate from D-erythrose 4-phosphate and phosphoenolpyruvate: step 5/7. Catalyzes the specific phosphorylation of the 3-hydroxyl group of shikimic acid using ATP as a cosubstrate. In Mycobacterium leprae (strain TN), this protein is Shikimate kinase.